A 761-amino-acid chain; its full sequence is Xaa-Pro dipeptidyl-peptidase (761 aa).

Residues serine 347, aspartate 467, and histidine 497 each act as charge relay system in the active site.

It belongs to the peptidase S15 family. Homodimer.

It is found in the cytoplasm. The enzyme catalyses Hydrolyzes Xaa-Pro-|- bonds to release unblocked, N-terminal dipeptides from substrates including Ala-Pro-|-p-nitroanilide and (sequentially) Tyr-Pro-|-Phe-Pro-|-Gly-Pro-|-Ile.. In terms of biological role, removes N-terminal dipeptides sequentially from polypeptides having unsubstituted N-termini provided that the penultimate residue is proline. In Streptococcus agalactiae serotype III (strain NEM316), this protein is Xaa-Pro dipeptidyl-peptidase.